Reading from the N-terminus, the 120-residue chain is NAD(P)H-quinone oxidoreductase subunit 3 (120 aa).

A run of 3 helical transmembrane segments spans residues 10-32 (LLGFLLLCSLVPALALSASKVLR), 64-84 (MFALVFVIFDVETVFLYPWAV), and 89-109 (LGVLAFIEALIFIAILIVGLV).

This sequence belongs to the complex I subunit 3 family. As to quaternary structure, NDH-1 can be composed of about 15 different subunits; different subcomplexes with different compositions have been identified which probably have different functions.

The protein resides in the cellular thylakoid membrane. It carries out the reaction a plastoquinone + NADH + (n+1) H(+)(in) = a plastoquinol + NAD(+) + n H(+)(out). It catalyses the reaction a plastoquinone + NADPH + (n+1) H(+)(in) = a plastoquinol + NADP(+) + n H(+)(out). NDH-1 shuttles electrons from an unknown electron donor, via FMN and iron-sulfur (Fe-S) centers, to quinones in the respiratory and/or the photosynthetic chain. The immediate electron acceptor for the enzyme in this species is believed to be plastoquinone. Couples the redox reaction to proton translocation, and thus conserves the redox energy in a proton gradient. Cyanobacterial NDH-1 also plays a role in inorganic carbon-concentration. This Acaryochloris marina (strain MBIC 11017) protein is NAD(P)H-quinone oxidoreductase subunit 3.